Reading from the N-terminus, the 95-residue chain is Cell division topological specificity factor (95 aa).

It belongs to the MinE family.

In terms of biological role, prevents the cell division inhibition by proteins MinC and MinD at internal division sites while permitting inhibition at polar sites. This ensures cell division at the proper site by restricting the formation of a division septum at the midpoint of the long axis of the cell. The protein is Cell division topological specificity factor of Methylorubrum extorquens (strain CM4 / NCIMB 13688) (Methylobacterium extorquens).